A 321-amino-acid chain; its full sequence is Cytoskeleton protein RodZ (321 aa).

Over 1-111 (MNTEATHDQN…LGKRRKKRDG (111 aa)) the chain is Cytoplasmic. Residues 19–71 (LRNAREQLGLSQQAVAERLCLKVSTVRDIEEDKAPSDLASTFLRGYIRSYARL) enclose the HTH cro/C1-type domain. A DNA-binding region (H-T-H motif) is located at residues 30–49 (QQAVAERLCLKVSTVRDIEE). A helical; Signal-anchor for type II membrane protein membrane pass occupies residues 112–132 (WLMSFTWLVLFVVVGLTGAWW). Over 133–321 (WQNHKAQQEE…TINAEPTSAQ (189 aa)) the chain is Periplasmic. Residues 167 to 190 (DTRAAASQDTTPAETAPAAPVDST) form a disordered region. The span at 176–190 (TTPAETAPAAPVDST) shows a compositional bias: low complexity.

This sequence belongs to the RodZ family.

Its subcellular location is the cell inner membrane. In terms of biological role, cytoskeletal protein that is involved in cell-shape control through regulation of the length of the long axis. This Salmonella arizonae (strain ATCC BAA-731 / CDC346-86 / RSK2980) protein is Cytoskeleton protein RodZ.